The sequence spans 493 residues: UPF0699 transmembrane protein YdbT (493 aa).

6 helical membrane-spanning segments follow: residues 18–38, 46–66, 188–208, 232–252, 370–390, and 393–413; these read CHTI…VYIV, FYGA…SIIK, LMAA…FALI, IGIY…FSIA, VIFS…WGYL, and ILLP…AWTI.

It belongs to the UPF0699 family.

It is found in the cell membrane. The sequence is that of UPF0699 transmembrane protein YdbT (ydbT) from Bacillus subtilis (strain 168).